The primary structure comprises 113 residues: U11-theraphotoxin-Hhn1a (113 aa).

Positions 1–21 (MNTVRVTFLLVFVLAVSLGQT) are cleaved as a signal peptide. Positions 22–74 (DKDENRMEMQEKTEQGKSYLDFAENLLLQKLEELEAKLLEEDSEESRNSRQKR) are excised as a propeptide. 3 disulfides stabilise this stretch: Cys75–Cys90, Cys82–Cys95, and Cys89–Cys110.

Belongs to the neurotoxin 14 (magi-1) family. 01 (HNTX-16) subfamily. As to expression, expressed by the venom gland.

The protein localises to the secreted. In terms of biological role, probable ion channel inhibitor. This chain is U11-theraphotoxin-Hhn1a, found in Cyriopagopus hainanus (Chinese bird spider).